The primary structure comprises 283 residues: Bifunctional protein FolD (283 aa).

Residues 166-168 (GAS), Ser191, and Ile232 contribute to the NADP(+) site.

This sequence belongs to the tetrahydrofolate dehydrogenase/cyclohydrolase family. In terms of assembly, homodimer.

The enzyme catalyses (6R)-5,10-methylene-5,6,7,8-tetrahydrofolate + NADP(+) = (6R)-5,10-methenyltetrahydrofolate + NADPH. It carries out the reaction (6R)-5,10-methenyltetrahydrofolate + H2O = (6R)-10-formyltetrahydrofolate + H(+). Its pathway is one-carbon metabolism; tetrahydrofolate interconversion. Functionally, catalyzes the oxidation of 5,10-methylenetetrahydrofolate to 5,10-methenyltetrahydrofolate and then the hydrolysis of 5,10-methenyltetrahydrofolate to 10-formyltetrahydrofolate. In Chromobacterium violaceum (strain ATCC 12472 / DSM 30191 / JCM 1249 / CCUG 213 / NBRC 12614 / NCIMB 9131 / NCTC 9757 / MK), this protein is Bifunctional protein FolD.